Reading from the N-terminus, the 303-residue chain is Peroxisomal trans-2-enoyl-CoA reductase (303 aa).

23–47 (VTGGATGIGKAIVKELLELGSNVVI) contacts NADP(+). Lysine 32 carries the N6-succinyllysine modification. Phosphoserine is present on serine 49. Tyrosine 179 acts as the Proton acceptor in catalysis. Residue tyrosine 179 is modified to Phosphotyrosine. The Microbody targeting signal motif lies at 301–303 (AKL).

The protein belongs to the short-chain dehydrogenases/reductases (SDR) family. Interacts with PEX5, probably required to target it into peroxisomes.

The protein resides in the peroxisome. It catalyses the reaction a (2E)-enoyl-CoA + NADPH + H(+) = a 2,3-saturated acyl-CoA + NADP(+). The catalysed reaction is (2E)-decenoyl-CoA + NADPH + H(+) = decanoyl-CoA + NADP(+). It carries out the reaction (2E)-hexenoyl-CoA + NADPH + H(+) = hexanoyl-CoA + NADP(+). The enzyme catalyses (2E)-octenoyl-CoA + NADPH + H(+) = octanoyl-CoA + NADP(+). It catalyses the reaction (2E)-dodecenoyl-CoA + NADPH + H(+) = dodecanoyl-CoA + NADP(+). The catalysed reaction is (2E)-tetradecenoyl-CoA + NADPH + H(+) = tetradecanoyl-CoA + NADP(+). It functions in the pathway lipid metabolism; fatty acid biosynthesis. Functionally, participates in chain elongation of fatty acids. Catalyzes the reduction of trans-2-enoyl-CoAs of varying chain lengths from 6:1 to 16:1, having maximum activity with 10:1 CoA. Has no 2,4-dienoyl-CoA reductase activity. This chain is Peroxisomal trans-2-enoyl-CoA reductase, found in Homo sapiens (Human).